The chain runs to 279 residues: Vacuolar iron transporter cccA (279 aa).

Residues 1-44 (MLGGRHSHWSPQDLEEQAFSPYGTFPPSPTESTETSSSISSTRP) are disordered. Residues 30–44 (TESTETSSSISSTRP) show a composition bias toward low complexity. The next 5 helical transmembrane spans lie at 55-75 (ILGL…LSAL), 80-100 (VVVV…GLGG), 185-205 (ITLA…YFMV), 208-228 (VLVA…VFGY), and 243-263 (IVAG…AAGA).

This sequence belongs to the CCC1 family.

Its subcellular location is the vacuole membrane. The catalysed reaction is Fe(2+)(in) = Fe(2+)(out). In terms of biological role, vacuolar iron transporter involved in the transfer of iron from the cytosol to the vacuole for intracellular iron storage. Plays an essential role in iron detoxification during high iron conditions. The polypeptide is Vacuolar iron transporter cccA (Arthroderma benhamiae (strain ATCC MYA-4681 / CBS 112371) (Trichophyton mentagrophytes)).